The primary structure comprises 238 residues: Uridylate kinase (238 aa).

12–15 lines the ATP pocket; the sequence is KLSG. Position 54 (Gly54) interacts with UMP. Residues Gly55 and Arg59 each coordinate ATP. UMP is bound by residues Asp74 and 135–142; that span reads TGNPFFTT. Residues Thr162, Tyr168, and Asp171 each coordinate ATP.

Belongs to the UMP kinase family. As to quaternary structure, homohexamer.

The protein resides in the cytoplasm. The catalysed reaction is UMP + ATP = UDP + ADP. Its pathway is pyrimidine metabolism; CTP biosynthesis via de novo pathway; UDP from UMP (UMPK route): step 1/1. With respect to regulation, inhibited by UTP. Its function is as follows. Catalyzes the reversible phosphorylation of UMP to UDP. The sequence is that of Uridylate kinase from Nitrosospira multiformis (strain ATCC 25196 / NCIMB 11849 / C 71).